Consider the following 306-residue polypeptide: Homoserine O-acetyltransferase (306 aa).

The Acyl-thioester intermediate role is filled by Cys142. Residues Lys163 and Ser192 each contribute to the substrate site. Residue His235 is the Proton acceptor of the active site. Glu237 is a catalytic residue. Residue Arg249 participates in substrate binding.

It belongs to the MetA family.

The protein resides in the cytoplasm. It carries out the reaction L-homoserine + acetyl-CoA = O-acetyl-L-homoserine + CoA. It functions in the pathway amino-acid biosynthesis; L-methionine biosynthesis via de novo pathway; O-acetyl-L-homoserine from L-homoserine: step 1/1. In terms of biological role, transfers an acetyl group from acetyl-CoA to L-homoserine, forming acetyl-L-homoserine. The sequence is that of Homoserine O-acetyltransferase from Clostridium botulinum (strain Eklund 17B / Type B).